We begin with the raw amino-acid sequence, 588 residues long: Lysine--tRNA ligase (588 aa).

The span at 1-10 (MDSSVSTEPL) shows a compositional bias: polar residues. The disordered stretch occupies residues 1–54 (MDSSVSTEPLSKNALKREKKAKEKEQLEQEKKAAAVAKRQMEQHNLPENDDLDP). Positions 20-47 (KAKEKEQLEQEKKAAAVAKRQMEQHNLP) are enriched in basic and acidic residues.

Belongs to the class-II aminoacyl-tRNA synthetase family.

Its subcellular location is the cytoplasm. The enzyme catalyses tRNA(Lys) + L-lysine + ATP = L-lysyl-tRNA(Lys) + AMP + diphosphate. This Solanum lycopersicum (Tomato) protein is Lysine--tRNA ligase (LYSRS).